The chain runs to 519 residues: Transketolase, chloroplastic (519 aa).

Asp-11 contacts Mg(2+). Residues Gly-12 and Asn-41 each contribute to the thiamine diphosphate site. 2 residues coordinate Mg(2+): Asn-41 and Ile-43. Position 118 (His-118) interacts with thiamine diphosphate. Residues His-118, Arg-212, and Ser-239 each coordinate substrate. 2 residues coordinate thiamine diphosphate: Glu-266 and Phe-293. Catalysis depends on Glu-266, which acts as the Proton donor. The substrate site is built by His-317, Asp-325, and Arg-376.

It belongs to the transketolase family. Homodimer. Mg(2+) serves as cofactor. It depends on Ca(2+) as a cofactor. Mn(2+) is required as a cofactor. Requires Co(2+) as cofactor. The cofactor is thiamine diphosphate. Constitutively expressed in leaves and roots.

The protein resides in the plastid. The protein localises to the chloroplast. The enzyme catalyses D-sedoheptulose 7-phosphate + D-glyceraldehyde 3-phosphate = aldehydo-D-ribose 5-phosphate + D-xylulose 5-phosphate. Catalyzes the transfer of a two-carbon ketol group from a ketose donor to an aldose acceptor, via a covalent intermediate with the cofactor thiamine pyrophosphate. The chain is Transketolase, chloroplastic (TKT3) from Craterostigma plantagineum (Blue gem).